Reading from the N-terminus, the 92-residue chain is Mediator-associated protein 3 (92 aa).

Residues 13–70 enclose the DEK-C domain; it reads KDLRRKIKKTVKKILESSNLYKITEIKAREEASLKLDLDLSQDPYKVIVKEEVENFLE.

In terms of assembly, associated with the Mediator complex.

The protein localises to the nucleus. This is Mediator-associated protein 3 from Arabidopsis thaliana (Mouse-ear cress).